The sequence spans 205 residues: Proteasome subunit beta (205 aa).

The propeptide at 1-9 is removed in mature form; by autocatalysis; that stretch reads MNQTENMEG. T10 serves as the catalytic Nucleophile.

Belongs to the peptidase T1B family. The 20S proteasome core is composed of 14 alpha and 14 beta subunits that assemble into four stacked heptameric rings, resulting in a barrel-shaped structure. The two inner rings, each composed of seven catalytic beta subunits, are sandwiched by two outer rings, each composed of seven alpha subunits. The catalytic chamber with the active sites is on the inside of the barrel. Has a gated structure, the ends of the cylinder being occluded by the N-termini of the alpha-subunits. Is capped at one or both ends by the proteasome regulatory ATPase, PAN.

The protein resides in the cytoplasm. It catalyses the reaction Cleavage of peptide bonds with very broad specificity.. The formation of the proteasomal ATPase PAN-20S proteasome complex, via the docking of the C-termini of PAN into the intersubunit pockets in the alpha-rings, triggers opening of the gate for substrate entry. Interconversion between the open-gate and close-gate conformations leads to a dynamic regulation of the 20S proteasome proteolysis activity. Its function is as follows. Component of the proteasome core, a large protease complex with broad specificity involved in protein degradation. The chain is Proteasome subunit beta from Methanosphaera stadtmanae (strain ATCC 43021 / DSM 3091 / JCM 11832 / MCB-3).